Consider the following 109-residue polypeptide: UPF0449 protein C19orf25 homolog (109 aa).

Tyr63 carries the post-translational modification Phosphotyrosine.

The protein belongs to the UPF0449 family.

This is UPF0449 protein C19orf25 homolog from Rattus norvegicus (Rat).